The sequence spans 298 residues: MLKIGSHVSMSGKKMLLAASEEAVSYGANTFMIYTGAPQNTRRKKIEELNIEAGLAHMKEHGIEEIVVHAPYIINIGNTKNPDTFALGVEFLRSEIERTEAIGAKQIVLHPGAHVGAGPEAGIRKIIEGLNEVLTREQTVQIALETMAGKGSECGRSFEELAQIIDGVTHNEKLSVCFDTCHTHDAGYNIVDDFDGVLEEFDRIIGLDRLKVLHINDSKNPRGSRKDRHENIGFGHIGFAALNYIVHHPQLADIPKILETPYVGEDKNNKKPPYKHEIAMLRAQVFDEELLTKIMNDE.

Zn(2+) contacts are provided by histidine 69, histidine 110, glutamate 145, aspartate 179, histidine 182, histidine 214, aspartate 227, histidine 229, and glutamate 259.

The protein belongs to the AP endonuclease 2 family. Zn(2+) serves as cofactor.

It catalyses the reaction Endonucleolytic cleavage to 5'-phosphooligonucleotide end-products.. Endonuclease IV plays a role in DNA repair. It cleaves phosphodiester bonds at apurinic or apyrimidinic (AP) sites, generating a 3'-hydroxyl group and a 5'-terminal sugar phosphate. In Geobacillus sp. (strain WCH70), this protein is Probable endonuclease 4.